Reading from the N-terminus, the 195-residue chain is 5'-deoxynucleotidase SO_2484 (195 aa).

Substrate contacts are provided by residues 16–17 (RW) and H31. The HD domain occupies 28-140 (VQEHSLQVAM…VKSADTLCAY (113 aa)). 3 residues coordinate a divalent metal cation: H31, H66, and D67. Residues D67, 75–78 (DLPT), and D135 each bind substrate. D135 is an a divalent metal cation binding site.

It belongs to the 5DNU family. Homodimer. Requires a divalent metal cation as cofactor.

The protein resides in the cytoplasm. The catalysed reaction is a 2'-deoxyribonucleoside 5'-phosphate + H2O = a 2'-deoxyribonucleoside + phosphate. Catalyzes the strictly specific dephosphorylation of 2'-deoxyribonucleoside 5'-monophosphates. The sequence is that of 5'-deoxynucleotidase SO_2484 from Shewanella oneidensis (strain ATCC 700550 / JCM 31522 / CIP 106686 / LMG 19005 / NCIMB 14063 / MR-1).